Consider the following 492-residue polypeptide: Octanoyltransferase (492 aa).

The tract at residues 1-255 is unknown; that stretch reads MRCILLGSGT…GYDGLEAIID (255 aa). Residues 256–492 form a lipB domain region; it reads EKGIRIKDFE…AVFRRNFGAL (237 aa). The 188-residue stretch at 305–492 folds into the BPL/LPL catalytic domain; that stretch reads RKPQNTLLFC…AVFRRNFGAL (188 aa). Residues 350–357, 423–425, and 436–438 each bind substrate; these read RGGDITYH, AIG, and GFA. Cys454 serves as the catalytic Acyl-thioester intermediate.

This sequence in the C-terminal section; belongs to the LipB family.

Its subcellular location is the cytoplasm. The enzyme catalyses octanoyl-[ACP] + L-lysyl-[protein] = N(6)-octanoyl-L-lysyl-[protein] + holo-[ACP] + H(+). It participates in protein modification; protein lipoylation via endogenous pathway; protein N(6)-(lipoyl)lysine from octanoyl-[acyl-carrier-protein]: step 1/2. Functionally, catalyzes the transfer of endogenously produced octanoic acid from octanoyl-acyl-carrier-protein onto the lipoyl domains of lipoate-dependent enzymes. Lipoyl-ACP can also act as a substrate although octanoyl-ACP is likely to be the physiological substrate. This Porphyromonas gingivalis (strain ATCC BAA-308 / W83) protein is Octanoyltransferase.